Here is a 232-residue protein sequence, read N- to C-terminus: Putative quercetin 2,3-dioxygenase PA1210 (232 aa).

4 residues coordinate a divalent metal cation: histidine 57, histidine 59, histidine 101, and glutamate 103.

Belongs to the pirin family. The cofactor is a divalent metal cation.

It carries out the reaction quercetin + O2 = 2-(3,4-dihydroxybenzoyloxy)-4,6-dihydroxybenzoate + CO. The protein operates within flavonoid metabolism; quercetin degradation. Putative quercetin 2,3-dioxygenase. The chain is Putative quercetin 2,3-dioxygenase PA1210 from Pseudomonas aeruginosa (strain ATCC 15692 / DSM 22644 / CIP 104116 / JCM 14847 / LMG 12228 / 1C / PRS 101 / PAO1).